Here is a 253-residue protein sequence, read N- to C-terminus: GTP cyclohydrolase 1 type 2 homolog (253 aa).

5 residues coordinate a divalent metal cation: His-64, His-65, Asp-101, His-222, and Glu-226.

The protein belongs to the GTP cyclohydrolase I type 2/NIF3 family. As to quaternary structure, homohexamer.

This chain is GTP cyclohydrolase 1 type 2 homolog, found in Halobacterium salinarum (strain ATCC 700922 / JCM 11081 / NRC-1) (Halobacterium halobium).